Reading from the N-terminus, the 3013-residue chain is Protein furry homolog-like (3013 aa).

Serine 2 is subject to N-acetylserine. Residues 90–109 (DESYEYRPRSSTKSKGDEQQ) are disordered. A Phosphoserine modification is found at serine 844. Disordered regions lie at residues 878-897 (SSSTSAGSVRCSPPETLAST) and 1476-1498 (VTSGTTSSSNTMVAPTDGNPDNK). Over residues 1476-1486 (VTSGTTSSSNT) the composition is skewed to low complexity. A phosphoserine mark is found at serine 1914, serine 1935, serine 1941, serine 1945, and serine 1957. Threonine 1959 carries the post-translational modification Phosphothreonine. 3 positions are modified to phosphoserine: serine 1978, serine 2272, and serine 2454. Residues 2459–2492 (DKGDTPSLQEYQCSSSTPSLNLTNQEDTDESSEE) are disordered. A compositionally biased stretch (polar residues) spans 2464 to 2483 (PSLQEYQCSSSTPSLNLTNQ). The residue at position 2499 (serine 2499) is a Phosphoserine. Disordered regions lie at residues 2508–2567 (LNSD…DTTS) and 2636–2660 (EEEADFSGLSSQDEEEQDGFPEVQT). 2 stretches are compositionally biased toward polar residues: residues 2528 to 2539 (SEDSTGSITTEE) and 2555 to 2567 (DNANSRLPEDTTS).

This sequence belongs to the furry protein family. Widely expressed with higher expression in colon, placenta, brain and cells of lymphoid origin.

Plays a key role in maintaining the integrity of polarized cell extensions during morphogenesis, regulates the actin cytoskeleton and plays a key role in patterning sensory neuron dendritic fields by promoting avoidance between homologous dendrites as well as by limiting dendritic branching. May function as a transcriptional activator. The sequence is that of Protein furry homolog-like (FRYL) from Homo sapiens (Human).